Consider the following 143-residue polypeptide: 3-hydroxyacyl-[acyl-carrier-protein] dehydratase FabZ (143 aa).

H49 is an active-site residue.

It belongs to the thioester dehydratase family. FabZ subfamily.

The protein localises to the cytoplasm. It catalyses the reaction a (3R)-hydroxyacyl-[ACP] = a (2E)-enoyl-[ACP] + H2O. In terms of biological role, involved in unsaturated fatty acids biosynthesis. Catalyzes the dehydration of short chain beta-hydroxyacyl-ACPs and long chain saturated and unsaturated beta-hydroxyacyl-ACPs. The polypeptide is 3-hydroxyacyl-[acyl-carrier-protein] dehydratase FabZ (Ehrlichia chaffeensis (strain ATCC CRL-10679 / Arkansas)).